A 169-amino-acid polypeptide reads, in one-letter code: Large ribosomal subunit protein bL9 (169 aa).

The protein belongs to the bacterial ribosomal protein bL9 family.

Functionally, binds to the 23S rRNA. The polypeptide is Large ribosomal subunit protein bL9 (Chlamydia pneumoniae (Chlamydophila pneumoniae)).